The sequence spans 144 residues: Cysteine-rich tail protein 1 (144 aa).

The tract at residues 51 to 105 is disordered; the sequence is APEPTHLLQPTEVPGPKGAKGNQGAAPIQNQQAWQQPGNPYSSSQRQAGLTYAGP. Residues 78–98 are compositionally biased toward polar residues; the sequence is IQNQQAWQQPGNPYSSSQRQA.

Belongs to the CYSRT1 family. As to quaternary structure, interacts with LCE1B; the interaction is direct. Interacts with LCE2C; the interaction is direct. Interacts with LCE3A; the interaction is direct. Interacts with LCE3C; the interaction is direct. Interacts with LCE4A; the interaction is direct. Interacts with LCE5A; the interaction is direct. Interacts with LCE1C. Interacts with LCE1D. Interacts with LCE1E. Interacts with LCE2A. Interacts with LCE3D. Interacts with LCE3E. Interacts with LCE1A. In terms of tissue distribution, expressed in the stratum granulosum, in skin and oral epithelia (at protein level).

It localises to the cornified envelope. Functionally, component of the stratum corneum that may contribute to epidermal antimicrobial host defenses. This is Cysteine-rich tail protein 1 (CYSRT1) from Homo sapiens (Human).